A 266-amino-acid chain; its full sequence is F-actin-capping protein subunit beta (266 aa).

This sequence belongs to the F-actin-capping protein beta subunit family. In terms of assembly, component of the F-actin capping complex, composed of a heterodimer of an alpha and a beta subunit.

It is found in the cytoplasm. It localises to the cytoskeleton. The protein resides in the actin patch. Its function is as follows. F-actin-capping proteins bind in a Ca(2+)-independent manner to the fast growing ends of actin filaments (barbed end) thereby blocking the exchange of subunits at these ends. Unlike other capping proteins (such as gelsolin and severin), these proteins do not sever actin filaments. The chain is F-actin-capping protein subunit beta (cap2) from Emericella nidulans (strain FGSC A4 / ATCC 38163 / CBS 112.46 / NRRL 194 / M139) (Aspergillus nidulans).